The sequence spans 634 residues: DNA-directed RNA polymerase subunit gamma (634 aa).

C74, C76, C89, and C92 together coordinate Zn(2+). Residues D471, D473, and D475 each coordinate Mg(2+).

The protein belongs to the RNA polymerase beta' chain family. RpoC1 subfamily. As to quaternary structure, in cyanobacteria the RNAP catalytic core is composed of 2 alpha, 1 beta, 1 beta', 1 gamma and 1 omega subunit. When a sigma factor is associated with the core the holoenzyme is formed, which can initiate transcription. The cofactor is Mg(2+). It depends on Zn(2+) as a cofactor.

It carries out the reaction RNA(n) + a ribonucleoside 5'-triphosphate = RNA(n+1) + diphosphate. Functionally, DNA-dependent RNA polymerase catalyzes the transcription of DNA into RNA using the four ribonucleoside triphosphates as substrates. The sequence is that of DNA-directed RNA polymerase subunit gamma from Prochlorococcus marinus subsp. pastoris (strain CCMP1986 / NIES-2087 / MED4).